The primary structure comprises 886 residues: MSIPKQLPCMVRALYAWPGEREGDLKFTEGDLIECLSIGDGKWWIGRHINTNTQGIFPSNFVHCLDIPTVRPGSSMSRTSASSFRYSSPQKSSIDTPITSSDQGLTPDLVGSSNALNKPTRESDSLKHQKSHPMLNSLGSSLSLKKSVSRPPSSMSRTNLDVSSRWDNTADNDSQIDAQDLSRSTPSPLRSAMENVLQSLNAMGKKSFSRANSPLLRLTKSTTTSKETDFIPVPPAHGSTSMTSRSKLDDSTDNSSKPRTSLQPGESPMKSSRDISRKPSMASSVLSPSDYFPQHRRFQSAPAPIPRPVSTLIPLTQVRTTASNVIKPRPQTTERPSTAQSFRKGGGFLKKTFKKLLRRGSSKRKPSLQPTPPVSYPAHNVPQKGVRPASPHTLKSVKDDLKRTKTYTKAEFAAKREEIFNKLSMPVYEPLKDLSECIGNVLADGEPVQFSVGTNIHNMNFSAIDKQIRSIIPQRVQVSPAVLAKNYLAPGQTTALAQMRAVFIYISERITFTNQTLDNDELRTSTQVISEGQGTPFEVALLVKEMLQALDLWCEVIEGYLKSPDDIYYTRDININHAWNVVTFDNEVRLIDASFASPTHPQQALKSSSSNDFYFLMKPNECIFTHVPENPDQQFIMPDLSMPIVMALPWVSSVYFTLGLKLRKFNTSILHLNDLEVLQIEFLAPKDIECVAEVDALSALAPTADVSQCYKYTLTQAFWETPDIRVMRVKAVMPANNRAAVLRIYAGRLGVSSPVRTAPHPMAMSLPFVHHGKNKALEFVTRHPVPHCPSVDLYINSPQCGTLHSGVEYKFNVSAYACQPSTSISNTRLAIQTPTGNIVRLREERSGNGVIFFSLSLTINETGEYRALILAEKIGRWVVYATWQAV.

The SH3 domain occupies 6-67 (QLPCMVRALY…PSNFVHCLDI (62 aa)). Residues 72–88 (PGSSMSRTSASSFRYSS) show a composition bias toward low complexity. A disordered region spans residues 72 to 189 (PGSSMSRTSA…DLSRSTPSPL (118 aa)). A compositionally biased stretch (polar residues) spans 89–104 (PQKSSIDTPITSSDQG). Over residues 135-154 (LNSLGSSLSLKKSVSRPPSS) the composition is skewed to low complexity. The span at 155–188 (MSRTNLDVSSRWDNTADNDSQIDAQDLSRSTPSP) shows a compositional bias: polar residues. Serine 213 carries the phosphoserine modification. 2 disordered regions span residues 219–290 (TKST…SPSD) and 358–393 (RRGS…SPHT). The span at 253–264 (DNSSKPRTSLQP) shows a compositional bias: polar residues.

It belongs to the CYK3 family.

It localises to the cell tip. Functionally, involved in cytokinesis. The polypeptide is cytokinesis protein 3 (cyk3) (Schizosaccharomyces pombe (strain 972 / ATCC 24843) (Fission yeast)).